A 188-amino-acid chain; its full sequence is Cell division protein SepF (188 aa).

Over residues 152-162 (TSHDEASTPTV) the composition is skewed to polar residues. Residues 152–188 (TSHDEASTPTVVSRDAEAEQQQEAAAAPSPAWGATAL) form a disordered region.

It belongs to the SepF family. Homodimer. Interacts with FtsZ.

The protein resides in the cytoplasm. Its function is as follows. Cell division protein that is part of the divisome complex and is recruited early to the Z-ring. Probably stimulates Z-ring formation, perhaps through the cross-linking of FtsZ protofilaments. Its function overlaps with FtsA. This Parasynechococcus marenigrum (strain WH8102) protein is Cell division protein SepF.